Here is a 270-residue protein sequence, read N- to C-terminus: ATP synthase subunit a (270 aa).

Transmembrane regions (helical) follow at residues 27-47 (FWTF…VFIL), 90-110 (IAPL…MDLI), 147-166 (VNMT…FYSV), 182-202 (PFNT…SLIA), 211-231 (LFGN…TLGV), and 238-258 (FLWA…FMML).

The protein belongs to the ATPase A chain family. In terms of assembly, F-type ATPases have 2 components, CF(1) - the catalytic core - and CF(0) - the membrane proton channel. CF(1) has five subunits: alpha(3), beta(3), gamma(1), delta(1), epsilon(1). CF(0) has three main subunits: a(1), b(2) and c(9-12). The alpha and beta chains form an alternating ring which encloses part of the gamma chain. CF(1) is attached to CF(0) by a central stalk formed by the gamma and epsilon chains, while a peripheral stalk is formed by the delta and b chains.

Its subcellular location is the cell inner membrane. In terms of biological role, key component of the proton channel; it plays a direct role in the translocation of protons across the membrane. This chain is ATP synthase subunit a, found in Pseudoalteromonas atlantica (strain T6c / ATCC BAA-1087).